The following is an 899-amino-acid chain: CNK3/IPCEF1 fusion protein (899 aa).

Residues W7–L72 enclose the SAM domain. Residues N80–A174 form the CRIC domain. The region spanning E211–P293 is the PDZ domain. Disordered stretches follow at residues W309–L334 and P347–Q390. One can recognise a DUF1170 domain in the interval T332–A457. S383 carries the phosphoserine modification. The PH domain maps to H503–I602. Disordered regions lie at residues E605–V687, L735–S770, and Q868–I899. Acidic residues predominate over residues C613–I624. A compositionally biased stretch (low complexity) spans A634–L662. A compositionally biased stretch (polar residues) spans E663–L676. The segment covering L735 to S745 has biased composition (low complexity). The span at I761 to S770 shows a compositional bias: basic and acidic residues. Positions K851–I899 are required for interaction with CYTH2. S873 bears the Phosphoserine mark. Residues S889–I899 are compositionally biased toward polar residues.

It belongs to the CNKSR family.

Its function is as follows. Required for hepatocyte growth factor (HGF)-dependent activation of Arf6 and HGF-stimulated cell migration. The protein is CNK3/IPCEF1 fusion protein (CNK3/IPCEF1) of Homo sapiens (Human).